The following is a 372-amino-acid chain: MEKFMAEFGQGYVQTPFLSESNSVRYKISIAGSCPLSTAGPSYVKFQDNPVGSQTFSAGLHLRVFDPSTGALVDSKSYAFSTSNDTTSAAFVSFMNSLTNNRIVAILTSGKVNFPPEVVSWLRTAGTSAFPSDSILSRFDVSYAAFYTSSKRAIALEHVKLSNRKSTDDYQTILDVVFDSLEDVGATGFPRGTYESVEQFMSAVGGTNDEIARLPTSAAISKLSDYNLIPGDVLYLKAQLYADADLLALGTTNISIRFYNASNGYISSTQAEFTGQAGSWELKEDYVVVPENAVGFTIYAQRTAQAGQGGMRNLSFSEVSRNGGISKPAEFGVNGIRVNYICESASPPDIMVLPTQASSKTGKVFGQEFREV.

Residues 22–193 (NSVRYKISIA…VGATGFPRGT (172 aa)) enclose the GG-type lectin domain.

In terms of assembly, the long-tail fibers are trimeric, with a stoichiometry of gp34/gp37/gp36/gp35 of 3:3:3:1.

The protein localises to the virion. Structural component of the distal-half of the long-tail fiber. The long-tail fiber of T4 is about 1600 Angstroms long with a kink in the middle that divides the fiber into proximal and distal halves. The latter hinge is probably composed of gp35 protein. The protein is Long-tail fiber protein gp35 (35) of Enterobacteria phage T4 (Bacteriophage T4).